Reading from the N-terminus, the 241-residue chain is UDP-2,3-diacylglucosamine hydrolase (241 aa).

5 residues coordinate Mn(2+): Asp-8, His-10, Asp-41, Asn-78, and His-113. 78 to 79 (NR) serves as a coordination point for substrate. Substrate is bound by residues Asp-121, Ser-159, Asn-163, Lys-166, and His-194. Residues His-194 and His-196 each coordinate Mn(2+).

It belongs to the LpxH family. Requires Mn(2+) as cofactor.

It is found in the cell inner membrane. It carries out the reaction UDP-2-N,3-O-bis[(3R)-3-hydroxytetradecanoyl]-alpha-D-glucosamine + H2O = 2-N,3-O-bis[(3R)-3-hydroxytetradecanoyl]-alpha-D-glucosaminyl 1-phosphate + UMP + 2 H(+). The protein operates within glycolipid biosynthesis; lipid IV(A) biosynthesis; lipid IV(A) from (3R)-3-hydroxytetradecanoyl-[acyl-carrier-protein] and UDP-N-acetyl-alpha-D-glucosamine: step 4/6. Hydrolyzes the pyrophosphate bond of UDP-2,3-diacylglucosamine to yield 2,3-diacylglucosamine 1-phosphate (lipid X) and UMP by catalyzing the attack of water at the alpha-P atom. Involved in the biosynthesis of lipid A, a phosphorylated glycolipid that anchors the lipopolysaccharide to the outer membrane of the cell. This is UDP-2,3-diacylglucosamine hydrolase from Shewanella putrefaciens (strain CN-32 / ATCC BAA-453).